Consider the following 545-residue polypeptide: Chaperonin GroEL (545 aa).

ATP is bound by residues threonine 30–proline 33, lysine 51, aspartate 87–threonine 91, glycine 415, and aspartate 495.

It belongs to the chaperonin (HSP60) family. Forms a cylinder of 14 subunits composed of two heptameric rings stacked back-to-back. Interacts with the co-chaperonin GroES.

The protein resides in the cytoplasm. It catalyses the reaction ATP + H2O + a folded polypeptide = ADP + phosphate + an unfolded polypeptide.. Functionally, together with its co-chaperonin GroES, plays an essential role in assisting protein folding. The GroEL-GroES system forms a nano-cage that allows encapsulation of the non-native substrate proteins and provides a physical environment optimized to promote and accelerate protein folding. The chain is Chaperonin GroEL from Shewanella baltica (strain OS185).